Reading from the N-terminus, the 99-residue chain is NADH-ubiquinone oxidoreductase chain 4L (99 aa).

3 consecutive transmembrane segments (helical) span residues 1-21, 25-45, and 56-76; these read MTIY…FFTQ, ILSL…SVAV, and VMIL…SLLV.

This sequence belongs to the complex I subunit 4L family.

It is found in the mitochondrion membrane. The enzyme catalyses a ubiquinone + NADH + 5 H(+)(in) = a ubiquinol + NAD(+) + 4 H(+)(out). Its function is as follows. Core subunit of the mitochondrial membrane respiratory chain NADH dehydrogenase (Complex I) that is believed to belong to the minimal assembly required for catalysis. Complex I functions in the transfer of electrons from NADH to the respiratory chain. The immediate electron acceptor for the enzyme is believed to be ubiquinone. The chain is NADH-ubiquinone oxidoreductase chain 4L (ND4L) from Albinaria caerulea (Land snail).